The primary structure comprises 1060 residues: CCR4-NOT transcriptional complex subunit CAF120 (1060 aa).

The tract at residues 1–29 (MRIFSGDNKVVDSPASNPGLMSPSNFGGD) is disordered. One can recognise a PH domain in the interval 75 to 204 (RRYHEGVFLI…WNSAIRLCLY (130 aa)). A compositionally biased stretch (low complexity) spans 465 to 481 (KLSYGSKSSSNNSSKNS). Disordered regions lie at residues 465–588 (KLSY…ETSC), 718–742 (SINSNSDSDRINGSYSQVDFDNNND), and 801–1060 (EHRS…PYAQ). Residues 490–504 (LSSSSEQDLNNSDSP) are compositionally biased toward polar residues. Residues Ser-491, Ser-510, Ser-518, Ser-538, and Ser-556 each carry the phosphoserine modification. Basic and acidic residues predominate over residues 571 to 588 (NDRKATTPEKFERGETSC). Over residues 718–731 (SINSNSDSDRINGS) the composition is skewed to low complexity. Basic and acidic residues predominate over residues 801–814 (EHRSRHEVPKRSPE). Residues 845 to 883 (SITPQRGQPVPSGQQISSYVQPANINSPNKMYGANNSAM) show a composition bias toward polar residues. 2 positions are modified to phosphoserine: Ser-871 and Ser-885. Polar residues-rich tracts occupy residues 900 to 923 (QGWNNRPSPSNIYQRPHPSDTQPQ), 931 to 945 (PYSTGNRPNMQAQYH), and 1048 to 1060 (FMPSATTKNPYAQ).

The protein belongs to the CAF120 family. In terms of assembly, subunit of the 1.0 MDa CCR4-NOT core complex that contains CCR4, CAF1, CAF120, NOT1, NOT2, NOT3, NOT4, NOT5, CAF40 and CAF130. In the complex interacts with NOT1. The core complex probably is part of a less characterized 1.9 MDa CCR4-NOT complex.

Its subcellular location is the cytoplasm. It is found in the nucleus. The protein localises to the bud neck. Functionally, acts as a component of the CCR4-NOT core complex, which in the nucleus seems to be a general transcription factor, and in the cytoplasm the major mRNA deadenylase involved in mRNA turnover. The NOT protein subcomplex negatively regulates the basal and activated transcription of many genes. Preferentially affects TC-type TATA element-dependent transcription. Could directly or indirectly inhibit component(s) of the general transcription machinery. This chain is CCR4-NOT transcriptional complex subunit CAF120 (CAF120), found in Saccharomyces cerevisiae (strain YJM789) (Baker's yeast).